Reading from the N-terminus, the 67-residue chain is Large ribosomal subunit protein uL30 (67 aa).

This sequence belongs to the universal ribosomal protein uL30 family. Part of the 50S ribosomal subunit.

The protein is Large ribosomal subunit protein uL30 of Sorangium cellulosum (strain So ce56) (Polyangium cellulosum (strain So ce56)).